The primary structure comprises 398 residues: O-methyltransferase penC (398 aa).

Asp-263 contacts S-adenosyl-L-methionine. Residue His-305 is the Proton acceptor of the active site.

The protein belongs to the class I-like SAM-binding methyltransferase superfamily. Cation-independent O-methyltransferase family.

It participates in secondary metabolite biosynthesis. It functions in the pathway alkaloid biosynthesis. The protein operates within mycotoxin biosynthesis. In terms of biological role, O-methyltransferase; part of the gene cluster that mediates the biosynthesis of penigequinolones, potent insecticidal alkaloids that contain a highly modified 10-carbon prenyl group. The first stage is catalyzed by the nonribosomal peptide synthetase penN that condenses anthranilic acid and O-methyl-L-tyrosine to produce 4'-methoxycyclopeptin. 4'-methoxycyclopeptin is then converted to 4'-methoxydehydrocyclopeptin by the ketoglutarate-dependent dioxygenase penM through dehydrogenation to form a double bond between C-alpha and C-beta of the O-methyltyrosine side chain. PenM also converts its first product methoxydehydrocyclopeptin to 4'-methoxycyclopenin. The following conversion of 4'methoxycyclopenin into 4'-methoxyviridicatin is catalyzed by the cyclopenase penL. 4'-methoxyviridicatin is the precursor of quinolone natural products, and is further converted to quinolinone B. The prenyltransferase penI then catalyzes the canonical Friedel-Crafts alkylation of quinolinone B with dimethylallyl cation to yield dimethylallyl quinolone, which is subjected to FAD-dependent dehydrogenation by the FAD-linked oxidoreductase penH to yield conjugated aryl diene. The delta(3') double bond then serves as the site of the second alkylation with DMAPP catalyzed by the prenyltransferase penG to yield a carbenium ion intermediate, which can be attacked by H(2)O to yield a styrenyl quinolone containing a C3'-hydroxyprenyl chain, or undergo cyclization to yield yaequinolones J1 and J2. The conversion of the styrenyl quinolone into the tetrahydrofuran-containing yaequinolone C is performed by the FAD-dependent monooxygenase penE and involves epoxidation of the terminal C7'-C8' olefin, followed by epoxide ring opening initiated by the C3' hydroxyl group. The predicted cysteine hydrolase penJ acts as an epoxide hydrolase that enhances the rate of the 5-exo-tet cyclization step, increasing the yield of yaequinolone C. PenF catalyzes the cationic rearrangement of the epoxide formed by penE (before ring opening to produce yaequinolone C) into yaequinolone D. Finally, the short-chain dehydrogenase/reductase (SDR)-like reductase penD, catalyzes both the dehydration of yaequinolone D and the reduction of the resulting oxonium to yield penigequinolone. This chain is O-methyltransferase penC, found in Penicillium thymicola.